Here is a 586-residue protein sequence, read N- to C-terminus: uncharacterized protein (586 aa).

The next 6 helical transmembrane spans lie at 95 to 115 (VIAG…IHFV), 129 to 151 (IYSF…FGVQ), 155 to 177 (IPWL…RIII), 198 to 217 (YFIY…FQFL), 247 to 267 (YIGG…WLFL), and 284 to 304 (IVAT…FATL).

It belongs to the ycf78 family.

The protein localises to the plastid membrane. This is an uncharacterized protein from Prototheca wickerhamii.